Here is a 100-residue protein sequence, read N- to C-terminus: NAD(P)H-quinone oxidoreductase subunit 4L, chloroplastic (100 aa).

Transmembrane regions (helical) follow at residues 1 to 21 (MLEH…YGLI), 29 to 49 (ALMC…TFSN), and 63 to 83 (IFVT…ALAI).

This sequence belongs to the complex I subunit 4L family. As to quaternary structure, NDH is composed of at least 16 different subunits, 5 of which are encoded in the nucleus.

The protein localises to the plastid. It localises to the chloroplast thylakoid membrane. It carries out the reaction a plastoquinone + NADH + (n+1) H(+)(in) = a plastoquinol + NAD(+) + n H(+)(out). The catalysed reaction is a plastoquinone + NADPH + (n+1) H(+)(in) = a plastoquinol + NADP(+) + n H(+)(out). Functionally, NDH shuttles electrons from NAD(P)H:plastoquinone, via FMN and iron-sulfur (Fe-S) centers, to quinones in the photosynthetic chain and possibly in a chloroplast respiratory chain. The immediate electron acceptor for the enzyme in this species is believed to be plastoquinone. Couples the redox reaction to proton translocation, and thus conserves the redox energy in a proton gradient. This chain is NAD(P)H-quinone oxidoreductase subunit 4L, chloroplastic, found in Cycas taitungensis (Prince sago).